The primary structure comprises 238 residues: Small ribosomal subunit protein uS2 (238 aa).

This sequence belongs to the universal ribosomal protein uS2 family.

This chain is Small ribosomal subunit protein uS2, found in Prochlorococcus marinus (strain SARG / CCMP1375 / SS120).